The sequence spans 242 residues: RNA transcription, translation and transport factor protein (242 aa).

The protein belongs to the RTRAF family. As to quaternary structure, homodimer. Component of a tRNA-splicing ligase complex.

The protein localises to the nucleus. It localises to the cytoplasm. The protein resides in the cytosol. Its subcellular location is the perinuclear region. It is found in the cytoskeleton. The protein localises to the microtubule organizing center. It localises to the centrosome. Its function is as follows. RNA-binding protein involved in modulation of mRNA transcription by Polymerase II. Component of the tRNA-splicing ligase complex. The sequence is that of RNA transcription, translation and transport factor protein from Danio rerio (Zebrafish).